The following is a 270-amino-acid chain: 5'-nucleotidase SurE (270 aa).

Residues aspartate 14, aspartate 15, serine 46, and asparagine 104 each coordinate a divalent metal cation.

This sequence belongs to the SurE nucleotidase family. It depends on a divalent metal cation as a cofactor.

It localises to the cytoplasm. It catalyses the reaction a ribonucleoside 5'-phosphate + H2O = a ribonucleoside + phosphate. Nucleotidase that shows phosphatase activity on nucleoside 5'-monophosphates. This is 5'-nucleotidase SurE from Microcystis aeruginosa (strain NIES-843 / IAM M-2473).